Reading from the N-terminus, the 83-residue chain is Calsensin (83 aa).

EF-hand domains lie at 4–39 (KVKAELEAAFKKLDANGDGYVTALELQTFMVTLDAY) and 46–81 (KVKEASAKLIKMADKNSDGKISKEEFLNANAELLCQ). Ca(2+) is bound by residues Asp17, Asn19, Asp21, Tyr23, Glu28, Asp59, Asn61, Asp63, Lys65, and Glu70.

In terms of tissue distribution, selectively expressed in a small group of neurons.

The protein localises to the cytoplasm. May function as a trigger protein which interacts with a larger protein. May mediate calcium-dependent signal transduction events in the growth cones and axons of a small group of sensory neurons which fasciculate in a single axon tract. This chain is Calsensin, found in Haemopis marmorata (Green horse leech).